Reading from the N-terminus, the 430-residue chain is Adenylosuccinate synthetase (430 aa).

Residues 12 to 18 (GDEGKGK) and 40 to 42 (GHT) each bind GTP. Asp-13 functions as the Proton acceptor in the catalytic mechanism. Mg(2+) contacts are provided by Asp-13 and Gly-40. IMP contacts are provided by residues 13–16 (DEGK), 38–41 (NAGH), Thr-130, Arg-144, Gln-224, Thr-239, and Arg-303. His-41 acts as the Proton donor in catalysis. Substrate is bound at residue 299–305 (TNTGRPR). GTP contacts are provided by residues Arg-305, 331 to 333 (KLD), and 413 to 415 (STS).

It belongs to the adenylosuccinate synthetase family. Homodimer. Mg(2+) is required as a cofactor.

Its subcellular location is the cytoplasm. It catalyses the reaction IMP + L-aspartate + GTP = N(6)-(1,2-dicarboxyethyl)-AMP + GDP + phosphate + 2 H(+). The protein operates within purine metabolism; AMP biosynthesis via de novo pathway; AMP from IMP: step 1/2. Its function is as follows. Plays an important role in the de novo pathway of purine nucleotide biosynthesis. Catalyzes the first committed step in the biosynthesis of AMP from IMP. In Rhodopseudomonas palustris (strain BisB5), this protein is Adenylosuccinate synthetase.